The chain runs to 494 residues: DEAD-box ATP-dependent RNA helicase CshA (494 aa).

Positions 3 to 31 match the Q motif motif; the sequence is ITFQDFNLSSDLMKAINRMGFEEATPIQA. Positions 34 to 204 constitute a Helicase ATP-binding domain; that stretch reads IPLGLSNKDV…ERFMTEPEHV (171 aa). 47-54 provides a ligand contact to ATP; the sequence is AQTGTGKT. Residues 152–155 carry the DEAD box motif; it reads DEAD. In terms of domain architecture, Helicase C-terminal spans 215–375; sequence NIQQFYLEVQ…RMKEPTLDEA (161 aa). Positions 413–494 are required for dimerization or oligomerization; the sequence is VTVVAAAIKM…SGDRRQKKSY (82 aa). The segment at 429–494 is disordered; it reads DTPVRLTDEA…SGDRRQKKSY (66 aa). The span at 443–452 shows a compositional bias: basic residues; sequence KRYKNQRSSK. Basic and acidic residues predominate over residues 473 to 488; that stretch reads SYDKKRSNDRRSSGDR.

The protein belongs to the DEAD box helicase family. CshA subfamily. Homodimer or oligomer. May interact with RNA helicases CshB and DbpA (DeaD). Probably a component of the RNA degradosome complex composed of rny, rnjA, rnjB, pnp, pfkA and eno, and possibly also rnpA (although rnjA and rnjB's presence is unclear). Interacts with ribosomal proteins L1 and L3 (rplA and rplC) and the protein component of RNase RnpA. Interacts with the RNA polymerase core. Requires Mg(2+) as cofactor.

The protein resides in the cytoplasm. The protein localises to the nucleoid. It localises to the cell membrane. The enzyme catalyses ATP + H2O = ADP + phosphate + H(+). RNA helicase activity is inhibited by EDTA. In terms of biological role, the most abundant DEAD-box RNA helicase. An ATP-dependent RNA helicase with RNA-dependent ATPase activity. May work in conjunction with the cold shock proteins to ensure proper initiation of transcription at low and optimal temperatures. In vitro, unwinds dsRNA in both 5'- and 3'- directions. Plays a role in ribosomal 50S subunit assembly. Its deletion leads to changes in mRNA levels for over 200 transcripts. The polypeptide is DEAD-box ATP-dependent RNA helicase CshA (Bacillus subtilis (strain 168)).